Here is a 428-residue protein sequence, read N- to C-terminus: Enolase (428 aa).

(2R)-2-phosphoglycerate is bound at residue glutamine 163. The Proton donor role is filled by glutamate 205. Residues aspartate 242, glutamate 283, and aspartate 310 each coordinate Mg(2+). (2R)-2-phosphoglycerate contacts are provided by lysine 335, arginine 364, serine 365, and lysine 386. Catalysis depends on lysine 335, which acts as the Proton acceptor.

Belongs to the enolase family. Requires Mg(2+) as cofactor.

Its subcellular location is the cytoplasm. It localises to the secreted. The protein resides in the cell surface. The catalysed reaction is (2R)-2-phosphoglycerate = phosphoenolpyruvate + H2O. It participates in carbohydrate degradation; glycolysis; pyruvate from D-glyceraldehyde 3-phosphate: step 4/5. Its function is as follows. Catalyzes the reversible conversion of 2-phosphoglycerate (2-PG) into phosphoenolpyruvate (PEP). It is essential for the degradation of carbohydrates via glycolysis. The polypeptide is Enolase (Sulfurihydrogenibium sp. (strain YO3AOP1)).